A 70-amino-acid polypeptide reads, in one-letter code: uncharacterized protein (70 aa).

Residues 12–32 traverse the membrane as a helical segment; that stretch reads VLFMNFFSVFVCTIGTLFLVF.

It is found in the membrane. This is an uncharacterized protein from Saccharomyces cerevisiae (strain ATCC 204508 / S288c) (Baker's yeast).